Consider the following 146-residue polypeptide: Ribonuclease H (146 aa).

One can recognise an RNase H type-1 domain in the interval 1-143 (MRKKIIIYTD…CDYLARQAIK (143 aa)). Mg(2+) contacts are provided by Asp-10, Glu-48, Asp-70, and Asp-135.

Belongs to the RNase H family. As to quaternary structure, monomer. Mg(2+) is required as a cofactor.

It is found in the cytoplasm. The enzyme catalyses Endonucleolytic cleavage to 5'-phosphomonoester.. Its function is as follows. Endonuclease that specifically degrades the RNA of RNA-DNA hybrids. This is Ribonuclease H from Prosthecochloris aestuarii (strain DSM 271 / SK 413).